The primary structure comprises 321 residues: Lipoyl synthase (321 aa).

Residues cysteine 68, cysteine 73, cysteine 79, cysteine 94, cysteine 98, cysteine 101, and serine 308 each coordinate [4Fe-4S] cluster. The region spanning 80 to 297 (FNHGTATFMI…KAEAMAMGFT (218 aa)) is the Radical SAM core domain.

This sequence belongs to the radical SAM superfamily. Lipoyl synthase family. [4Fe-4S] cluster is required as a cofactor.

It localises to the cytoplasm. It catalyses the reaction [[Fe-S] cluster scaffold protein carrying a second [4Fe-4S](2+) cluster] + N(6)-octanoyl-L-lysyl-[protein] + 2 oxidized [2Fe-2S]-[ferredoxin] + 2 S-adenosyl-L-methionine + 4 H(+) = [[Fe-S] cluster scaffold protein] + N(6)-[(R)-dihydrolipoyl]-L-lysyl-[protein] + 4 Fe(3+) + 2 hydrogen sulfide + 2 5'-deoxyadenosine + 2 L-methionine + 2 reduced [2Fe-2S]-[ferredoxin]. It participates in protein modification; protein lipoylation via endogenous pathway; protein N(6)-(lipoyl)lysine from octanoyl-[acyl-carrier-protein]: step 2/2. In terms of biological role, catalyzes the radical-mediated insertion of two sulfur atoms into the C-6 and C-8 positions of the octanoyl moiety bound to the lipoyl domains of lipoate-dependent enzymes, thereby converting the octanoylated domains into lipoylated derivatives. The sequence is that of Lipoyl synthase from Cronobacter sakazakii (strain ATCC BAA-894) (Enterobacter sakazakii).